Consider the following 274-residue polypeptide: 2-dehydro-3-deoxyphosphooctonate aldolase (274 aa).

Belongs to the KdsA family.

It localises to the cytoplasm. The enzyme catalyses D-arabinose 5-phosphate + phosphoenolpyruvate + H2O = 3-deoxy-alpha-D-manno-2-octulosonate-8-phosphate + phosphate. It participates in carbohydrate biosynthesis; 3-deoxy-D-manno-octulosonate biosynthesis; 3-deoxy-D-manno-octulosonate from D-ribulose 5-phosphate: step 2/3. Its pathway is bacterial outer membrane biogenesis; lipopolysaccharide biosynthesis. In Rickettsia felis (strain ATCC VR-1525 / URRWXCal2) (Rickettsia azadi), this protein is 2-dehydro-3-deoxyphosphooctonate aldolase.